Here is a 131-residue protein sequence, read N- to C-terminus: Arsenate reductase 2 (131 aa).

Residues cysteine 10, cysteine 82, and cysteine 89 each act as nucleophile in the active site. Intrachain disulfides connect cysteine 10–cysteine 82 and cysteine 82–cysteine 89.

It belongs to the low molecular weight phosphotyrosine protein phosphatase family. Thioredoxin-coupled ArsC subfamily.

The protein localises to the cytoplasm. It carries out the reaction arsenate + [thioredoxin]-dithiol + H(+) = arsenite + [thioredoxin]-disulfide + H2O. Functionally, catalyzes the reduction of arsenate [As(V)] to arsenite [As(III)]. In Staphylococcus epidermidis (strain ATCC 35984 / DSM 28319 / BCRC 17069 / CCUG 31568 / BM 3577 / RP62A), this protein is Arsenate reductase 2.